Here is a 432-residue protein sequence, read N- to C-terminus: Trigger factor (432 aa).

The PPIase FKBP-type domain occupies 163 to 248 (GDIAVIDFEG…LKALNKKELP (86 aa)).

This sequence belongs to the FKBP-type PPIase family. Tig subfamily.

It localises to the cytoplasm. The enzyme catalyses [protein]-peptidylproline (omega=180) = [protein]-peptidylproline (omega=0). Involved in protein export. Acts as a chaperone by maintaining the newly synthesized protein in an open conformation. Functions as a peptidyl-prolyl cis-trans isomerase. This chain is Trigger factor, found in Caldanaerobacter subterraneus subsp. tengcongensis (strain DSM 15242 / JCM 11007 / NBRC 100824 / MB4) (Thermoanaerobacter tengcongensis).